Reading from the N-terminus, the 357-residue chain is Guanine nucleotide-binding protein G(o) subunit alpha (357 aa).

Gly2 carries the N-myristoyl glycine lipid modification. The S-palmitoyl cysteine moiety is linked to residue Cys3. Residues 32-357 (KDIKLLLLGA…ANNLRGCGLY (326 aa)) enclose the G-alpha domain. Residues 35–48 (KLLLLGAGESGKST) are G1 motif. GTP is bound by residues 40–47 (GAGESGKS), 179–185 (LRTRVKT), 204–208 (DVGGQ), 273–276 (NKKD), and Ala329. The Mg(2+) site is built by Ser47 and Thr185. Residues 177–185 (DILRTRVKT) are G2 motif. The segment at 200–209 (FKLFDVGGQR) is G3 motif. The G4 motif stretch occupies residues 269–276 (ILFLNKKD). The segment at 327-332 (TCATDT) is G5 motif.

Belongs to the G-alpha family. G(i/o/t/z) subfamily. G proteins are composed of 3 units; alpha, beta and gamma. The alpha chain contains the guanine nucleotide binding site.

Functionally, guanine nucleotide-binding proteins (G proteins) are involved as modulators or transducers in various transmembrane signaling systems. The G(o) protein function is not clear. The polypeptide is Guanine nucleotide-binding protein G(o) subunit alpha (SCGOA) (Mizuhopecten yessoensis (Japanese scallop)).